Here is a 1108-residue protein sequence, read N- to C-terminus: MLRIRRRFALVICSGCLLVFLSLYIILNFAAPAATQIKPNYENIENKLHELENGLQEHGEEMRNLRARLAETSNRDDPIRPPLKVARSPRPGQCQDVVQDVPNVDVQMLELYDRMSFKDIDGGVWKQGWNIKYDPLKYNAHHKLKVFVVPHSHNDPGWIQTFEEYYQHDTKHILSNALRHLHDNPEMKFIWAEISYFARFYHDLGENKKLQMKSIVKNGQLEFVTGGWVMPDEANSHWRNVLLQLTEGQTWLKQFMNVTPTASWAIDPFGHSPTMPYILQKSGFKNMLIQRTHYSVKKELAQQRQLEFLWRQIWDNKGDTALFTHMMPFYSYDIPHTCGPDPKVCCQFDFKRMGSFGLSCPWKVPPRTISDQNVAARSDLLVDQWKKKAELYRTNVLLIPLGDDFRFKQNTEWDVQRVNYERLFEHINSQAHFNVQAQFGTLQEYFDAVHQAERAGQAEFPTLSGDFFTYADRSDNYWSGYYTSRPYHKRMDRVLMHYVRAAEMLSAWHSWDGMARIEERLEQARRELSLFQHHDGITGTAKTHVVVDYEQRMQEALKACQMVMQQSVYRLLTKPSIYSPDFSFSYFTLDDSRWPGSGVEDSRTTIILGEDILPSKHVVMHNTLPHWREQLVDFYVSSPFVSVTDLANNPVEAQVSPVWSWHHDTLTKTIHPQGSTTKYRIIFKARVPPMGLATYVLTISDSKPEHTSYASNLLLRKNPTSLPLGQYPEDVKFGDPREISLRVGNGPTLAFSEQGLLKSIQLTQDSPHVPVHFKFLKYGVRSHGDRSGAYLFLPNGPASPVELGQPVVLVTKGKLESSVSVGLPSVVHQTIMRGGAPEIRNLVDIGSLDNTEIVMRLETHIDSGDIFYTDLNGLQFIKRRRLDKLPLQANYYPIPSGMFIEDANTRLTLLTGQPLGGSSLASGELEIMQDRRLASDDERGLGQGVLDNKPVLHIYRLVLEKVNNCVRPSELHPAGYLTSAAHKASQSLLDPLDKFIFAENEWIGAQGQFGGDHPSAREDLDVSVMRRLTKSSAKTQRVGYVLHRTNLMQCGTPEEHTQKLDVCHLLPNVARCERTTLTFLQNLEHLDGMVAPEVCPMETAAYVSSHSS.

Residues 1–9 lie on the Cytoplasmic side of the membrane; sequence MLRIRRRFA. Residues 10–30 traverse the membrane as a helical; Signal-anchor for type II membrane protein segment; it reads LVICSGCLLVFLSLYIILNFA. Topologically, residues 31 to 1108 are lumenal; it reads APAATQIKPN…TAAYVSSHSS (1078 aa). The tract at residues 70 to 92 is disordered; the sequence is AETSNRDDPIRPPLKVARSPRPG. Positions 153, 155, 267, and 534 each coordinate Zn(2+). The active-site Nucleophile is Asp-267.

It belongs to the glycosyl hydrolase 38 family. As to quaternary structure, homodimer; disulfide-linked. Zn(2+) serves as cofactor.

The protein resides in the golgi apparatus membrane. It catalyses the reaction N(4)-{beta-D-GlcNAc-(1-&gt;2)-alpha-D-Man-(1-&gt;3)-[alpha-D-Man-(1-&gt;3)-[alpha-D-Man-(1-&gt;6)]-alpha-D-Man-(1-&gt;6)]-beta-D-Man-(1-&gt;4)-beta-D-GlcNAc-(1-&gt;4)-beta-D-GlcNAc}-L-asparaginyl-[protein] + 2 H2O = 2 alpha-D-mannopyranose + an N(4)-{beta-D-GlcNAc-(1-&gt;2)-alpha-D-Man-(1-&gt;3)-[alpha-D-Man-(1-&gt;6)]-beta-D-Man-(1-&gt;4)-beta-D-GlcNAc-(1-&gt;4)-beta-D-GlcNAc}-L-asparaginyl-[protein]. The protein operates within protein modification; protein glycosylation. Catalyzes the first committed step in the biosynthesis of complex N-glycans. It controls conversion of high mannose to complex N-glycans; the final hydrolytic step in the N-glycan maturation pathway. This chain is Alpha-mannosidase 2, found in Drosophila melanogaster (Fruit fly).